The primary structure comprises 622 residues: Glucose 1,6-bisphosphate synthase (622 aa).

Alpha-D-glucose 1,6-bisphosphate is bound by residues arginine 73 and serine 175. Residue serine 175 is the Phosphoserine intermediate of the active site. Mg(2+)-binding residues include serine 175, aspartate 332, and aspartate 334. Phosphoserine is present on serine 175. Residues aspartate 336, arginine 337, glutamate 434, serine 436, and lysine 448 each coordinate alpha-D-glucose 1,6-bisphosphate.

The protein belongs to the phosphohexose mutase family.

It localises to the cytoplasm. Its subcellular location is the cytosol. The enzyme catalyses (2R)-3-phospho-glyceroyl phosphate + alpha-D-glucose 1-phosphate = alpha-D-glucose 1,6-bisphosphate + (2R)-3-phosphoglycerate + H(+). It catalyses the reaction alpha-D-glucose 6-phosphate + (2R)-3-phospho-glyceroyl phosphate = alpha-D-glucose 1,6-bisphosphate + (2R)-3-phosphoglycerate + H(+). It carries out the reaction (2R)-3-phospho-glyceroyl phosphate + alpha-D-ribose 1-phosphate = alpha-D-ribose 1,5-bisphosphate + (2R)-3-phosphoglycerate + H(+). The catalysed reaction is 2-deoxy-alpha-D-ribose 1-phosphate + (2R)-3-phospho-glyceroyl phosphate = 2-deoxy-alpha-D-ribose 1,5-bisphosphate + (2R)-3-phosphoglycerate + H(+). The enzyme catalyses (2R)-3-phospho-glyceroyl phosphate + alpha-D-mannose 1-phosphate = alpha-D-mannose 1,6-bisphosphate + (2R)-3-phosphoglycerate + H(+). In terms of biological role, glucose 1,6-bisphosphate synthase using 1,3-bisphosphoglycerate as a phosphate donor and a series of 1-phosphate sugars, including glucose 1-phosphate, mannose 1-phosphate, ribose 1-phosphate and deoxyribose 1-phosphate, as acceptors. In vitro, also exhibits very low phosphopentomutase and phosphoglucomutase activity which are most probably not physiologically relevant. The chain is Glucose 1,6-bisphosphate synthase from Homo sapiens (Human).